The chain runs to 444 residues: Jacalin-related lectin 11 (444 aa).

Alanine 2 is subject to N-acetylalanine. Jacalin-type lectin domains are found at residues 2 to 143 (ALKV…YFIK), 146 to 290 (SIQS…YYAP), and 298 to 442 (PEKL…HVTA).

The protein belongs to the jacalin lectin family.

The protein is Jacalin-related lectin 11 (JAL11) of Arabidopsis thaliana (Mouse-ear cress).